The chain runs to 432 residues: Putative D-alanyl-D-alanine carboxypeptidase (432 aa).

Residues Ala-7 to Leu-25 traverse the membrane as a helical; Signal-anchor segment.

It belongs to the peptidase S12 family. YfeW subfamily.

It localises to the cell inner membrane. The enzyme catalyses Preferential cleavage: (Ac)2-L-Lys-D-Ala-|-D-Ala. Also transpeptidation of peptidyl-alanyl moieties that are N-acyl substituents of D-alanine.. The sequence is that of Putative D-alanyl-D-alanine carboxypeptidase from Salmonella enteritidis PT4 (strain P125109).